A 120-amino-acid chain; its full sequence is Glycine cleavage system H protein (120 aa).

Positions 17–99 constitute a Lipoyl-binding domain; the sequence is VATVGITAHA…MGAGWFFKLK (83 aa). Residue lysine 58 is modified to N6-lipoyllysine.

This sequence belongs to the GcvH family. The glycine cleavage system is composed of four proteins: P, T, L and H. The cofactor is (R)-lipoate.

The glycine cleavage system catalyzes the degradation of glycine. The H protein shuttles the methylamine group of glycine from the P protein to the T protein. This Rhizobium rhizogenes (strain K84 / ATCC BAA-868) (Agrobacterium radiobacter) protein is Glycine cleavage system H protein.